Consider the following 641-residue polypeptide: 1-phosphatidylinositol 4,5-bisphosphate phosphodiesterase zeta-1 (641 aa).

An EF-hand domain is found at 35–70 (CSYIHVKRIFKDNDRLKQGRITIEEFRAIYRILTHR). Residues 155–299 (QDMTHPLNDY…LKFKVLVKNK (145 aa)) enclose the PI-PLC X-box domain. Catalysis depends on residues H170 and H215. A PI-PLC Y-box domain is found at 382–498 (LSDLVIYTKA…GYILKPHFLR (117 aa)). The 125-residue stretch at 498 to 622 (RESESYFNPS…KGYRRVPLFS (125 aa)) folds into the C2 domain.

As to quaternary structure, interacts via its C2 domain with PtdIns(3)P and, to a lesser extent, PtdIns(5)P in vitro. Requires Ca(2+) as cofactor.

Its subcellular location is the nucleus. It is found in the cytoplasm. The protein localises to the perinuclear region. The enzyme catalyses a 1,2-diacyl-sn-glycero-3-phospho-(1D-myo-inositol-4,5-bisphosphate) + H2O = 1D-myo-inositol 1,4,5-trisphosphate + a 1,2-diacyl-sn-glycerol + H(+). Its function is as follows. The production of the second messenger molecules diacylglycerol (DAG) and inositol 1,4,5-trisphosphate (IP3) is mediated by activated phosphatidylinositol-specific phospholipase C enzymes. In vitro, hydrolyzes PtdIns(4,5)P2 in a Ca(2+)-dependent manner. Triggers intracellular Ca(2+) oscillations in oocytes solely during M phase and is involved in inducing oocyte activation and initiating embryonic development up to the blastocyst stage. Is therefore a strong candidate for the egg-activating soluble sperm factor that is transferred from the sperm into the egg cytoplasm following gamete membrane fusion. May exert an inhibitory effect on phospholipase-C-coupled processes that depend on calcium ions and protein kinase C, including CFTR trafficking and function. The chain is 1-phosphatidylinositol 4,5-bisphosphate phosphodiesterase zeta-1 from Macaca fascicularis (Crab-eating macaque).